A 238-amino-acid chain; its full sequence is Partner of Y14 and mago (238 aa).

Residues M1–K183 form a disordered region. Basic and acidic residues-rich tracts occupy residues Q65–K77 and L123–A133. Low complexity predominate over residues R136–K155. A coiled-coil region spans residues D176 to R233.

The protein belongs to the pym family. As to quaternary structure, interacts (via N-terminus) with mago and tsu/Y14; the interaction is direct.

Its subcellular location is the cytoplasm. The protein localises to the nucleus. Regulator of the exon junction complex (EJC), a multiprotein complex that associates immediately upstream of the exon-exon junction on mRNAs and serves as a positional landmarks for the intron exon structure of genes and directs post-transcriptional processes in the cytoplasm such as mRNA export, nonsense-mediated mRNA decay (NMD) or translation. The protein is Partner of Y14 and mago of Culex quinquefasciatus (Southern house mosquito).